Consider the following 580-residue polypeptide: Double-stranded RNA-binding protein Staufen homolog 1 (580 aa).

Position 2 is an N-acetylserine (Ser2). Over residues 34-44 the composition is skewed to polar residues; the sequence is SIPSTTSSLPS. The disordered stretch occupies residues 34–59; that stretch reads SIPSTTSSLPSENAGRPIQNSALPSA. A DRBM 1 domain is found at 72–162; sequence TPTVELNALC…AAKALRTLQS (91 aa). An Asymmetric dimethylarginine modification is found at Arg108. An Asymmetric dimethylarginine; alternate modification is found at Arg115. Residue Arg115 is modified to Omega-N-methylarginine; alternate. The tract at residues 158 to 189 is disordered; it reads RTLQSEPLPERPEGRRPGEQVNGRESEEENLN. Positions 165-182 are enriched in basic and acidic residues; it reads LPERPEGRRPGEQVNGRE. Residue Ser183 is modified to Phosphoserine. Residues 191-258 form the DRBM 2 domain; the sequence is SEISQVFEIA…AIAVLEELKK (68 aa). Ser285 is modified (phosphoserine). In terms of domain architecture, DRBM 3 spans 293–361; the sequence is NPISRLAQIQ…AENMLEILGF (69 aa). The segment at 367-404 is disordered; sequence QPTKPALKSEEKTPIKKPGDGRKVTFFEPGSGDENGTS. The segment covering 373–391 has biased composition (basic and acidic residues); it reads LKSEEKTPIKKPGDGRKVT. Ser397 is modified (phosphoserine).

Binds tubulin. Binds with low affinity single-stranded RNA or DNA homopolymers. Interacts with CASC3 in an RNA-dependent manner. Identified in a mRNP complex, at least composed of DHX9, DDX3X, ELAVL1, HNRNPU, IGF2BP1, ILF3, PABPC1, PCBP2, PTBP2, STAU1, STAU2, SYNCRIP and YBX1. Interacts with the influenza virus nonstructural protein NS1.

The protein resides in the cytoplasm. It localises to the rough endoplasmic reticulum. In terms of biological role, binds double-stranded RNA (regardless of the sequence) and tubulin. May play a role in specific positioning of mRNAs at given sites in the cell by cross-linking cytoskeletal and RNA components, and in stimulating their translation at the site. This is Double-stranded RNA-binding protein Staufen homolog 1 (STAU1) from Ailuropoda melanoleuca (Giant panda).